Here is a 215-residue protein sequence, read N- to C-terminus: WAT1-related protein At3g28060 (215 aa).

5 helical membrane-spanning segments follow: residues 48 to 68 (IIIGSSGEVFWVEYTLIAVAY), 82 to 102 (FALALSHNVCVSISCAFVSLF), 117 to 137 (IMLICIVATGVVNSTSYVVES), 146 to 166 (VFLAMFRPLSIVTAVVLGAIF), and 176 to 196 (VIGGTLISIGFSVHNSLFHIA). Positions 65–186 (AVAYIVQTHI…IGGTLISIGF (122 aa)) constitute an EamA domain.

This sequence belongs to the drug/metabolite transporter (DMT) superfamily. Plant drug/metabolite exporter (P-DME) (TC 2.A.7.4) family.

Its subcellular location is the membrane. The sequence is that of WAT1-related protein At3g28060 from Arabidopsis thaliana (Mouse-ear cress).